Here is a 217-residue protein sequence, read N- to C-terminus: Protein TNT (217 aa).

The segment at 1–217 (MSLVPGQHCS…HSTKQTGGKE (217 aa)) is disordered. Polar residues-rich tracts occupy residues 20–36 (SPIT…TEFS) and 45–61 (TSPQ…SQGP). Low complexity-rich tracts occupy residues 91 to 104 (EPSL…LQSP) and 128 to 139 (QSSESHVSSVQH). 2 stretches are compositionally biased toward polar residues: residues 177 to 191 (RLNT…SQLG) and 207 to 217 (AHSTKQTGGKE).

Preferentially expressed in teratocarcinoma rather than in normal testis.

The polypeptide is Protein TNT (C16orf82) (Homo sapiens (Human)).